The following is a 173-amino-acid chain: 2-C-methyl-D-erythritol 2,4-cyclodiphosphate synthase (173 aa).

A divalent metal cation is bound by residues aspartate 17 and histidine 19. 4-CDP-2-C-methyl-D-erythritol 2-phosphate contacts are provided by residues 17 to 19 (DVH) and 49 to 50 (HS). Histidine 57 lines the a divalent metal cation pocket. Residues 76–80 (FPNTD), 147–150 (TTTE), phenylalanine 154, and arginine 157 each bind 4-CDP-2-C-methyl-D-erythritol 2-phosphate.

It belongs to the IspF family. As to quaternary structure, homotrimer. It depends on a divalent metal cation as a cofactor.

It carries out the reaction 4-CDP-2-C-methyl-D-erythritol 2-phosphate = 2-C-methyl-D-erythritol 2,4-cyclic diphosphate + CMP. It functions in the pathway isoprenoid biosynthesis; isopentenyl diphosphate biosynthesis via DXP pathway; isopentenyl diphosphate from 1-deoxy-D-xylulose 5-phosphate: step 4/6. In terms of biological role, involved in the biosynthesis of isopentenyl diphosphate (IPP) and dimethylallyl diphosphate (DMAPP), two major building blocks of isoprenoid compounds. Catalyzes the conversion of 4-diphosphocytidyl-2-C-methyl-D-erythritol 2-phosphate (CDP-ME2P) to 2-C-methyl-D-erythritol 2,4-cyclodiphosphate (ME-CPP) with a corresponding release of cytidine 5-monophosphate (CMP). The sequence is that of 2-C-methyl-D-erythritol 2,4-cyclodiphosphate synthase from Ehrlichia chaffeensis (strain ATCC CRL-10679 / Arkansas).